Reading from the N-terminus, the 363-residue chain is NAD(P)H-quinone oxidoreductase subunit 1, chloroplastic (363 aa).

The next 6 helical transmembrane spans lie at 27–47 (VWLL…VLVI), 104–124 (IAVI…HLVL), 127–147 (LSIG…GLLM), 248–268 (YSGI…LVSS), 300–320 (VFGM…FLFI), and 343–363 (FLLP…LFSL).

This sequence belongs to the complex I subunit 1 family. In terms of assembly, NDH is composed of at least 16 different subunits, 5 of which are encoded in the nucleus.

It is found in the plastid. It localises to the chloroplast thylakoid membrane. It carries out the reaction a plastoquinone + NADH + (n+1) H(+)(in) = a plastoquinol + NAD(+) + n H(+)(out). It catalyses the reaction a plastoquinone + NADPH + (n+1) H(+)(in) = a plastoquinol + NADP(+) + n H(+)(out). Its function is as follows. NDH shuttles electrons from NAD(P)H:plastoquinone, via FMN and iron-sulfur (Fe-S) centers, to quinones in the photosynthetic chain and possibly in a chloroplast respiratory chain. The immediate electron acceptor for the enzyme in this species is believed to be plastoquinone. Couples the redox reaction to proton translocation, and thus conserves the redox energy in a proton gradient. The protein is NAD(P)H-quinone oxidoreductase subunit 1, chloroplastic of Ranunculus macranthus (Large buttercup).